The primary structure comprises 860 residues: Protein argonaute-2 (860 aa).

At Y2 the chain carries 3'-nitrotyrosine. One can recognise a PAZ domain in the interval 230 to 349 (PVIEFVCEVL…LPLEVCNIVA (120 aa)). The interaction with guide RNA stretch occupies residues 312-317 (YFKDRH). Position 388 is a phosphoserine (S388). The region spanning 518 to 819 (LVVVILPGKT…VAFRARYHLV (302 aa)) is the Piwi domain. The interval 525 to 567 (GKTPVYAEVKRVGDTVLGMATQCVQMKNVQRTTPQTLSNLCLK) is interaction with guide RNA. Positions 588–591 (FQQP) are interaction with GW182 family members. D598 is an a divalent metal cation binding site. The tract at residues 651 to 661 (LIQFYKSTRFK) is interaction with GW182 family members. Residue D670 participates in a divalent metal cation binding. At P701 the chain carries 4-hydroxyproline. 3 interaction with guide RNA regions span residues 710–711 (KR), 754–762 (HAGIQGTSR), and 791–813 (YVRC…VAFR). Residue H808 coordinates a divalent metal cation. Phosphoserine occurs at positions 825, 829, 832, and 835.

The protein belongs to the argonaute family. Ago subfamily. As to quaternary structure, interacts with DICER1 through its Piwi domain and with TARBP2 during assembly of the RNA-induced silencing complex (RISC). Together, DICER1, AGO2 and TARBP2 constitute the trimeric RISC loading complex (RLC), or micro-RNA (miRNA) loading complex (miRLC). Within the RLC/miRLC, DICER1 and TARBP2 are required to process precursor miRNAs (pre-miRNAs) to mature miRNAs and then load them onto AGO2. AGO2 bound to the mature miRNA constitutes the minimal RISC and may subsequently dissociate from DICER1 and TARBP2. Note however that the term RISC has also been used to describe the trimeric RLC/miRLC. The formation of RISC complexes containing siRNAs rather than miRNAs appears to occur independently of DICER1. Interacts with AGO1. Also interacts with DDB1, DDX5, DDX6, DDX20, DHX30, DHX36, DDX47, DHX9, ELAVL, FXR1, GEMIN4, HNRNPF, IGF2BP1, ILF3, IMP8, MATR3, PABPC1, PRMT5, P4HA1, P4HB, RBM4, SART3, TNRC6A, TNRC6B, UPF1 and YBX1. Interacts with the P-body components DCP1A and XRN1. Associates with polysomes and messenger ribonucleoproteins (mNRPs). Interacts with RBM4; the interaction is modulated under stress-induced conditions, occurs under both cell proliferation and differentiation conditions and in an RNA- and phosphorylation-independent manner. Interacts with LIMD1, WTIP and AJUBA. Interacts with TRIM71. Interacts with APOBEC3G in an RNA-dependent manner. Interacts with APOBEC3A, APOBEC3C, APOBEC3F and APOBEC3H. Interacts with DICER1, TARBP2, EIF6, MOV10 and RPL7A (60S ribosome subunit); they form a large RNA-induced silencing complex (RISC). Interacts with FMR1. Interacts with ZFP36. Interacts with RC3H1; the interaction is RNA independent. Interacts with ARB2A. Found in a complex composed of AGO2, CHD7 and ARB2A. Interacts with SND1 and SYT11. Interacts with CLNK. Interacts with GARRE1. Interacts with GRB2; this interaction is important for the formation of a ternary complex containing GRB2, AGO2 and DICER1. Requires Mg(2+) as cofactor. The cofactor is Mn(2+). Post-translationally, hydroxylated. 4-hydroxylation appears to enhance protein stability but is not required for miRNA-binding or endonuclease activity. Ubiquitinated on surface-exposed lysines by a SCF-like E3 ubiquitin-protein ligase complex containing ZSWIM8 during target-directed microRNA degradation (TDMD), a process that mediates degradation of microRNAs (miRNAs). Ubiquitination by the SCF-like E3 ubiquitin-protein ligase complex containing ZSWIM8 leads to its subsequent degradation, thereby exposing miRNAs for degradation. ZSWIM8 recognizes and binds AGO2 when it is engaged with a TDMD target. In terms of processing, phosphorylation at Ser-388 by AKT3; leads to up-regulate translational repression of microRNA target and down-regulate endonucleolytic cleavage. Post-translationally, a phosphorylation cycle of C-terminal serine cluster (Ser-825-Ser-835) regulates the release of target mRNAs. Target-binding leads to phosphorylation of these residues by CSNK1A1, which reduces the affinity of AGO2 for mRNA and enables target release. The ANKRD52-PPP6C phosphatase complex dephosphorylates the residues, which primes AGO2 for binding a new target. Ubiquitous expression in 9.5 day embryos with highest levels in forebrain, heart, limb buds, and branchial arches.

Its subcellular location is the cytoplasm. The protein resides in the P-body. The protein localises to the nucleus. The catalysed reaction is Endonucleolytic cleavage to 5'-phosphomonoester.. Its function is as follows. Required for RNA-mediated gene silencing (RNAi) by the RNA-induced silencing complex (RISC). The 'minimal RISC' appears to include AGO2 bound to a short guide RNA such as a microRNA (miRNA) or short interfering RNA (siRNA). These guide RNAs direct RISC to complementary mRNAs that are targets for RISC-mediated gene silencing. The precise mechanism of gene silencing depends on the degree of complementarity between the miRNA or siRNA and its target. Binding of RISC to a perfectly complementary mRNA generally results in silencing due to endonucleolytic cleavage of the mRNA specifically by AGO2. Binding of RISC to a partially complementary mRNA results in silencing through inhibition of translation, and this is independent of endonuclease activity. May inhibit translation initiation by binding to the 7-methylguanosine cap, thereby preventing the recruitment of the translation initiation factor eIF4-E. May also inhibit translation initiation via interaction with EIF6, which itself binds to the 60S ribosomal subunit and prevents its association with the 40S ribosomal subunit. The inhibition of translational initiation leads to the accumulation of the affected mRNA in cytoplasmic processing bodies (P-bodies), where mRNA degradation may subsequently occur. In some cases RISC-mediated translational repression is also observed for miRNAs that perfectly match the 3' untranslated region (3'-UTR). Can also up-regulate the translation of specific mRNAs under certain growth conditions. Binds to the AU element of the 3'-UTR of the TNF (TNF-alpha) mRNA and up-regulates translation under conditions of serum starvation. Also required for transcriptional gene silencing (TGS), in which short RNAs known as antigene RNAs or agRNAs direct the transcriptional repression of complementary promoter regions. Regulates lymphoid and erythroid development and function, and this is independent of endonuclease activity. This chain is Protein argonaute-2 (Ago2), found in Mus musculus (Mouse).